Consider the following 382-residue polypeptide: Inactive anthranilate O-methyltransferase 1 (382 aa).

Residues Tyr20, Cys61, Asn66, Asp102, Leu103, Ser146, and Tyr147 each contribute to the S-adenosyl-L-homocysteine site. Mg(2+)-binding residues include Glu268 and Phe270.

It belongs to the methyltransferase superfamily. Type-7 methyltransferase family. SABATH subfamily.

This chain is Inactive anthranilate O-methyltransferase 1 (AAMT1I), found in Zea mays (Maize).